Consider the following 171-residue polypeptide: ATP synthase subunit b (171 aa).

The chain crosses the membrane as a helical span at residues Val-19–Ile-39.

The protein belongs to the ATPase B chain family. In terms of assembly, F-type ATPases have 2 components, F(1) - the catalytic core - and F(0) - the membrane proton channel. F(1) has five subunits: alpha(3), beta(3), gamma(1), delta(1), epsilon(1). F(0) has three main subunits: a(1), b(2) and c(10-14). The alpha and beta chains form an alternating ring which encloses part of the gamma chain. F(1) is attached to F(0) by a central stalk formed by the gamma and epsilon chains, while a peripheral stalk is formed by the delta and b chains.

It localises to the cell inner membrane. Functionally, f(1)F(0) ATP synthase produces ATP from ADP in the presence of a proton or sodium gradient. F-type ATPases consist of two structural domains, F(1) containing the extramembraneous catalytic core and F(0) containing the membrane proton channel, linked together by a central stalk and a peripheral stalk. During catalysis, ATP synthesis in the catalytic domain of F(1) is coupled via a rotary mechanism of the central stalk subunits to proton translocation. Its function is as follows. Component of the F(0) channel, it forms part of the peripheral stalk, linking F(1) to F(0). The sequence is that of ATP synthase subunit b from Caulobacter sp. (strain K31).